The following is a 228-amino-acid chain: Geranylgeranylglyceryl phosphate synthase (228 aa).

K14 contributes to the sn-glycerol 1-phosphate binding site. The Mg(2+) site is built by D16 and T42. Residues 160–165 (YIEYSG), G190, and 210–211 (GN) each bind sn-glycerol 1-phosphate.

This sequence belongs to the GGGP/HepGP synthase family. Group I subfamily. Mg(2+) is required as a cofactor.

Its subcellular location is the cytoplasm. It carries out the reaction sn-glycerol 1-phosphate + (2E,6E,10E)-geranylgeranyl diphosphate = sn-3-O-(geranylgeranyl)glycerol 1-phosphate + diphosphate. Its pathway is membrane lipid metabolism; glycerophospholipid metabolism. Prenyltransferase that catalyzes the transfer of the geranylgeranyl moiety of geranylgeranyl diphosphate (GGPP) to the C3 hydroxyl of sn-glycerol-1-phosphate (G1P). This reaction is the first ether-bond-formation step in the biosynthesis of archaeal membrane lipids. The polypeptide is Geranylgeranylglyceryl phosphate synthase (Methanocella arvoryzae (strain DSM 22066 / NBRC 105507 / MRE50)).